Reading from the N-terminus, the 188-residue chain is Protein GrpE (188 aa).

Positions 1–30 (MTKKTSHHKAEQKEKRAGEESGRESEVLDH) are disordered. The segment covering 8–30 (HKAEQKEKRAGEESGRESEVLDH) has biased composition (basic and acidic residues).

It belongs to the GrpE family. Homodimer.

It localises to the cytoplasm. In terms of biological role, participates actively in the response to hyperosmotic and heat shock by preventing the aggregation of stress-denatured proteins, in association with DnaK and GrpE. It is the nucleotide exchange factor for DnaK and may function as a thermosensor. Unfolded proteins bind initially to DnaJ; upon interaction with the DnaJ-bound protein, DnaK hydrolyzes its bound ATP, resulting in the formation of a stable complex. GrpE releases ADP from DnaK; ATP binding to DnaK triggers the release of the substrate protein, thus completing the reaction cycle. Several rounds of ATP-dependent interactions between DnaJ, DnaK and GrpE are required for fully efficient folding. This chain is Protein GrpE, found in Chlorobium phaeobacteroides (strain BS1).